Consider the following 242-residue polypeptide: Proteasome subunit alpha (242 aa).

It belongs to the peptidase T1A family. As to quaternary structure, the 20S proteasome core is composed of 14 alpha and 14 beta subunits that assemble into four stacked heptameric rings, resulting in a barrel-shaped structure. The two inner rings, each composed of seven catalytic beta subunits, are sandwiched by two outer rings, each composed of seven alpha subunits. The catalytic chamber with the active sites is on the inside of the barrel. Has a gated structure, the ends of the cylinder being occluded by the N-termini of the alpha-subunits. Is capped by the proteasome-associated ATPase, ARC.

Its subcellular location is the cytoplasm. Its pathway is protein degradation; proteasomal Pup-dependent pathway. Its activity is regulated as follows. The formation of the proteasomal ATPase ARC-20S proteasome complex, likely via the docking of the C-termini of ARC into the intersubunit pockets in the alpha-rings, may trigger opening of the gate for substrate entry. Interconversion between the open-gate and close-gate conformations leads to a dynamic regulation of the 20S proteasome proteolysis activity. Functionally, component of the proteasome core, a large protease complex with broad specificity involved in protein degradation. The sequence is that of Proteasome subunit alpha from Renibacterium salmoninarum (strain ATCC 33209 / DSM 20767 / JCM 11484 / NBRC 15589 / NCIMB 2235).